A 107-amino-acid chain; its full sequence is uncharacterized protein (107 aa).

This is an uncharacterized protein from Schizosaccharomyces pombe (strain 972 / ATCC 24843) (Fission yeast).